We begin with the raw amino-acid sequence, 291 residues long: Taste receptor type 2 member 16 (291 aa).

Met1 is a topological domain (extracellular). Residues 2–22 form a helical membrane-spanning segment; it reads IPIQLTVFFMIIYVLESLTII. Topologically, residues 23–41 are cytoplasmic; that stretch reads VQSSLIVAVLGREWLQVRR. Residues 42-62 form a helical membrane-spanning segment; the sequence is LMPVDMILISLGISRFCLQWA. The Extracellular portion of the chain corresponds to 63–84; the sequence is SMLNBFCSYFNLNYVLCNLTIT. Residue Asn80 is glycosylated (N-linked (GlcNAc...) asparagine). Residues 85–105 traverse the membrane as a helical segment; it reads WEFFNILTFWLNSLLTVFYCI. Over 106-125 the chain is Cytoplasmic; the sequence is KVSSFTHHIFLWLRWRILRL. A helical membrane pass occupies residues 126–146; that stretch reads FPWILLGSLMITCVTIIPSAI. The Extracellular portion of the chain corresponds to 147–182; that stretch reads GNYIQIQLLTMEHLPRNSTVTDKLEKFHQYEFQAHT. The N-linked (GlcNAc...) asparagine glycan is linked to Asn163. A helical transmembrane segment spans residues 183-203; that stretch reads VALVIPFILFLASTILLMASL. The Cytoplasmic segment spans residues 204–228; that stretch reads TKQIQHHSTGHCNPSMKAHFTALRS. The chain crosses the membrane as a helical span at residues 229–249; it reads LAVLFIVFTSYFLTILITIIG. Topologically, residues 250–257 are extracellular; the sequence is TLFDRRCW. The chain crosses the membrane as a helical span at residues 258 to 278; sequence LWVWEAFVYAFILMHSTSLML. Residues 279-291 are Cytoplasmic-facing; that stretch reads SSPTLKRILKGKC.

Belongs to the G-protein coupled receptor T2R family. In terms of assembly, interacts with RTP3 and RTP4.

The protein localises to the cell membrane. Its function is as follows. Receptor that may play a role in the perception of bitterness and is gustducin-linked. May play a role in sensing the chemical composition of the gastrointestinal content. The activity of this receptor may stimulate alpha gustducin, mediate PLC-beta-2 activation and lead to the gating of TRPM5. In Gorilla gorilla gorilla (Western lowland gorilla), this protein is Taste receptor type 2 member 16 (TAS2R16).